A 108-amino-acid polypeptide reads, in one-letter code: Small ribosomal subunit protein eS25y (108 aa).

The tract at residues 1–36 is disordered; it reads MAPKKDKVPPPSSKPAKSGGGKQKKKKWSKGKQKEK. Basic residues predominate over residues 22–31; that stretch reads KQKKKKWSKG.

Belongs to the eukaryotic ribosomal protein eS25 family.

The sequence is that of Small ribosomal subunit protein eS25y (RPS25B) from Arabidopsis thaliana (Mouse-ear cress).